We begin with the raw amino-acid sequence, 335 residues long: Glycerol-3-phosphate dehydrogenase [NAD(P)+] (335 aa).

The NADPH site is built by S12, W13, and K107. Residues K107, G138, and S140 each contribute to the sn-glycerol 3-phosphate site. Residue A142 participates in NADPH binding. Residues K193, D246, S256, R257, and N258 each coordinate sn-glycerol 3-phosphate. K193 (proton acceptor) is an active-site residue. R257 lines the NADPH pocket. The NADPH site is built by V281 and E283.

This sequence belongs to the NAD-dependent glycerol-3-phosphate dehydrogenase family.

The protein resides in the cytoplasm. The catalysed reaction is sn-glycerol 3-phosphate + NAD(+) = dihydroxyacetone phosphate + NADH + H(+). The enzyme catalyses sn-glycerol 3-phosphate + NADP(+) = dihydroxyacetone phosphate + NADPH + H(+). Its pathway is membrane lipid metabolism; glycerophospholipid metabolism. Its function is as follows. Catalyzes the reduction of the glycolytic intermediate dihydroxyacetone phosphate (DHAP) to sn-glycerol 3-phosphate (G3P), the key precursor for phospholipid synthesis. In Geobacter sulfurreducens (strain ATCC 51573 / DSM 12127 / PCA), this protein is Glycerol-3-phosphate dehydrogenase [NAD(P)+].